The following is a 368-amino-acid chain: Quinolinate synthase (368 aa).

The iminosuccinate site is built by histidine 46 and serine 63. Cysteine 110 contacts [4Fe-4S] cluster. Iminosuccinate is bound by residues 141–143 (YVN) and serine 162. Residue cysteine 230 coordinates [4Fe-4S] cluster. Iminosuccinate is bound by residues 256-258 (HPE) and threonine 273. Position 320 (cysteine 320) interacts with [4Fe-4S] cluster.

It belongs to the quinolinate synthase family. Type 3 subfamily. Requires [4Fe-4S] cluster as cofactor.

The protein localises to the cytoplasm. The catalysed reaction is iminosuccinate + dihydroxyacetone phosphate = quinolinate + phosphate + 2 H2O + H(+). It functions in the pathway cofactor biosynthesis; NAD(+) biosynthesis; quinolinate from iminoaspartate: step 1/1. Functionally, catalyzes the condensation of iminoaspartate with dihydroxyacetone phosphate to form quinolinate. The protein is Quinolinate synthase of Bacillus cereus (strain Q1).